The primary structure comprises 321 residues: Phospho-N-acetylmuramoyl-pentapeptide-transferase (321 aa).

10 helical membrane-spanning segments follow: residues 1–21 (MIFVYALLALVITFVLVPVLI), 50–70 (MGGLTFLLSIVITSLVAIIFV), 76–96 (IILLLFVTIGFGLIGFIDDYI), 112–132 (FLAQIGIAIIFFVLSNVFHLV), 140–160 (IPFTNVAIPLSFAYVIFIVFW), 176–196 (GLATGLSIIGFTMYAIMSFVL), 200–220 (AIGIFCIIMLFALLGFLPYNI), 225–245 (VFMGDTGSLALGGIFATISIM), 250–270 (LSLIFIGLVFVIETLSVMLQV), and 300–320 (VVTVFWAVGLISGLIGLWIGV).

It belongs to the glycosyltransferase 4 family. MraY subfamily. Mg(2+) is required as a cofactor.

It is found in the cell membrane. The enzyme catalyses UDP-N-acetyl-alpha-D-muramoyl-L-alanyl-gamma-D-glutamyl-L-lysyl-D-alanyl-D-alanine + di-trans,octa-cis-undecaprenyl phosphate = Mur2Ac(oyl-L-Ala-gamma-D-Glu-L-Lys-D-Ala-D-Ala)-di-trans,octa-cis-undecaprenyl diphosphate + UMP. The protein operates within cell wall biogenesis; peptidoglycan biosynthesis. Its function is as follows. Catalyzes the initial step of the lipid cycle reactions in the biosynthesis of the cell wall peptidoglycan: transfers peptidoglycan precursor phospho-MurNAc-pentapeptide from UDP-MurNAc-pentapeptide onto the lipid carrier undecaprenyl phosphate, yielding undecaprenyl-pyrophosphoryl-MurNAc-pentapeptide, known as lipid I. The polypeptide is Phospho-N-acetylmuramoyl-pentapeptide-transferase (Staphylococcus aureus (strain Mu50 / ATCC 700699)).